Consider the following 388-residue polypeptide: Mannitol-1-phosphate 5-dehydrogenase (388 aa).

Ala5–Gly16 is an NAD(+) binding site. Lys213 is an active-site residue.

The protein belongs to the mannitol dehydrogenase family. Monomer.

It catalyses the reaction D-mannitol 1-phosphate + NAD(+) = beta-D-fructose 6-phosphate + NADH + H(+). In terms of biological role, catalyzes the NAD(H)-dependent interconversion of D-fructose 6-phosphate and D-mannitol 1-phosphate in the metabolism of mannitol. Has a strong preference for NADH over NADPH. This Aspergillus niger (strain ATCC MYA-4892 / CBS 513.88 / FGSC A1513) protein is Mannitol-1-phosphate 5-dehydrogenase (mpdA).